The sequence spans 196 residues: UPF0314 protein Oant_0840 (196 aa).

The next 4 membrane-spanning stretches (helical) occupy residues 15–35 (WGLGALIVLAILAVQASWLYF), 65–85 (WYTLSHIIHGFLFYWLFTVIA), 127–147 (FGDSIVNSVADTVAALIGFLI), and 151–171 (LPTKITVAIALFFEVLALIVI).

The protein belongs to the UPF0314 family.

The protein localises to the cell membrane. The protein is UPF0314 protein Oant_0840 of Brucella anthropi (strain ATCC 49188 / DSM 6882 / CCUG 24695 / JCM 21032 / LMG 3331 / NBRC 15819 / NCTC 12168 / Alc 37) (Ochrobactrum anthropi).